A 386-amino-acid chain; its full sequence is L-prolyl-[peptidyl-carrier protein] dehydrogenase (386 aa).

Residues 125-134 (NAATEPDAGS) and 158-160 (FIT) each bind FAD. Residue Glu-244 is the Proton acceptor of the active site. Residues Arg-270, Gln-281, 338-342 (QTFGG), and 367-369 (TND) contribute to the FAD site.

This sequence belongs to the acyl-CoA dehydrogenase family. FAD is required as a cofactor.

The enzyme catalyses L-prolyl-[peptidyl-carrier protein] + 2 oxidized [electron-transfer flavoprotein] + H(+) = (1H-pyrrole-2-carbonyl)-[peptidyl-carrier protein] + 2 reduced [electron-transfer flavoprotein]. It participates in antibiotic biosynthesis; prodigiosin biosynthesis. Functionally, involved in the biosynthesis of 4-methoxy-2,2'-bipyrrole-5-carbaldehyde (MBC), one of the terminal products involved in the biosynthesis of the red antibiotic prodigiosin (Pig). Catalyzes the desaturation of the L-prolyl-[PigG] to yield 1H-pyrrole-2-carbonyl-[PigG]. The polypeptide is L-prolyl-[peptidyl-carrier protein] dehydrogenase (Serratia sp. (strain ATCC 39006) (Prodigiosinella confusarubida)).